The chain runs to 1883 residues: Zinc finger protein 106 (1883 aa).

Residues isoleucine 6 and lysine 37 each participate in a glycyl lysine isopeptide (Lys-Gly) (interchain with G-Cter in SUMO2) cross-link. A C2H2-type 1; atypical zinc finger spans residues 20 to 44 (HECRVCGVTEVGLSAYAKHISGQLH). Positions 39–162 (ISGQLHKDNV…NGGGPRGRSG (124 aa)) are disordered. A compositionally biased stretch (acidic residues) spans 52–67 (EREDDGKGEEEEEDYF). Glycyl lysine isopeptide (Lys-Gly) (interchain with G-Cter in SUMO2) cross-links involve residues lysine 69 and lysine 76. Basic and acidic residues-rich tracts occupy residues 77-86 (QRKEQSRQDE), 96-116 (SDDR…DRES), and 128-138 (PQRDWKWEKDG). Lysine 133 is covalently cross-linked (Glycyl lysine isopeptide (Lys-Gly) (interchain with G-Cter in SUMO2)). Polar residues predominate over residues 139–148 (FNNTRKNSFP). Glycyl lysine isopeptide (Lys-Gly) (interchain with G-Cter in SUMO2) cross-links involve residues lysine 243, lysine 287, and lysine 305. The segment covering 322 to 338 (QTTKQADTATSKVSGKN) has biased composition (polar residues). A disordered region spans residues 322 to 356 (QTTKQADTATSKVSGKNGSAAREKPRRWTPYPSQK). Glycyl lysine isopeptide (Lys-Gly) (interchain with G-Cter in SUMO2) cross-links involve residues lysine 356, lysine 365, lysine 371, and lysine 417. The interval 389 to 423 (IQEPQTDETRNSPTQKTQKEIHTGSLNHKASSDSA) is disordered. Positions 412–423 (GSLNHKASSDSA) are enriched in polar residues. Serine 422 is subject to Phosphoserine. Residues lysine 451, lysine 461, lysine 477, lysine 492, lysine 505, lysine 515, lysine 525, lysine 539, and lysine 557 each participate in a glycyl lysine isopeptide (Lys-Gly) (interchain with G-Cter in SUMO2) cross-link. The disordered stretch occupies residues 457–501 (CPATKSLSQKQDPKNISKNTKTNFFSPGEHSNPSNKPTVEDNHGP). The segment covering 461 to 493 (KSLSQKQDPKNISKNTKTNFFSPGEHSNPSNKP) has biased composition (polar residues). The disordered stretch occupies residues 586–637 (LEDESDGETSDTEKHGTKIGTLGSATTELLSGSTRTADEKEEDDRILKTSRE). Serine 590 bears the Phosphoserine mark. Lysine 603 participates in a covalent cross-link: Glycyl lysine isopeptide (Lys-Gly) (interchain with G-Cter in SUMO2). The segment covering 608–620 (GSATTELLSGSTR) has biased composition (polar residues). 2 positions are modified to phosphoserine: serine 641 and serine 661. Glycyl lysine isopeptide (Lys-Gly) (interchain with G-Cter in SUMO2) cross-links involve residues lysine 671, lysine 684, lysine 705, lysine 721, lysine 741, lysine 775, and lysine 807. Serine 859, serine 861, serine 864, and serine 893 each carry phosphoserine. Positions 879–945 (EEGTGKENEP…HSAQLSSDHI (67 aa)) are disordered. Over residues 888 to 906 (PQQMVSPSNSLRAGQSQKA) the composition is skewed to polar residues. Residues lysine 905 and lysine 911 each participate in a glycyl lysine isopeptide (Lys-Gly) (interchain with G-Cter in SUMO2) cross-link. Phosphoserine is present on serine 937. A Glycyl lysine isopeptide (Lys-Gly) (interchain with G-Cter in SUMO2) cross-link involves residue lysine 953. The span at 958–976 (QERSIPPSENQNSQESNGE) shows a compositional bias: polar residues. Disordered stretches follow at residues 958–982 (QERS…CLSS), 997–1048 (ATDS…KERS), 1121–1140 (EPSE…RRNS), and 1182–1218 (PTFQ…VPPS). The residue at position 1021 (threonine 1021) is a Phosphothreonine. Phosphoserine is present on residues serine 1025, serine 1026, and serine 1031. Over residues 1035-1045 (KNKRRKIKGKK) the composition is skewed to basic residues. A Phosphoserine modification is found at serine 1249. The segment at 1252-1483 (ESTESFHEPS…EVSSTSEIGT (232 aa)) is disordered. Basic and acidic residues predominate over residues 1255–1277 (ESFHEPSQELKFSVEQRNTRNRE). Residue lysine 1265 forms a Glycyl lysine isopeptide (Lys-Gly) (interchain with G-Cter in SUMO2) linkage. Polar residues-rich tracts occupy residues 1278–1291 (NSPS…SSIN) and 1299–1312 (KGNS…SSFL). A phosphoserine mark is found at serine 1279, serine 1281, and serine 1284. A Glycyl lysine isopeptide (Lys-Gly) (interchain with G-Cter in SUMO2) cross-link involves residue lysine 1299. A Phosphoserine modification is found at serine 1302. Lysine 1324 participates in a covalent cross-link: Glycyl lysine isopeptide (Lys-Gly) (interchain with G-Cter in SUMO2). Serine 1328 carries the phosphoserine modification. Residues 1333–1346 (PEQQAESTLTSAET) are compositionally biased toward polar residues. A compositionally biased stretch (basic residues) spans 1349–1362 (SKKKKKLRKKKSLR). Serine 1370 bears the Phosphoserine mark. Position 1372 is a phosphothreonine (threonine 1372). Glycyl lysine isopeptide (Lys-Gly) (interchain with G-Cter in SUMO2) cross-links involve residues lysine 1380, lysine 1392, and lysine 1395. 2 stretches are compositionally biased toward basic and acidic residues: residues 1402–1416 (EDSR…VRDE) and 1444–1456 (GEEK…KKDI). A Glycyl lysine isopeptide (Lys-Gly) (interchain with G-Cter in SUMO2) cross-link involves residue lysine 1454. Residues 1457–1481 (WNSTEQNPLETSRSGCDEVSSTSEI) are compositionally biased toward polar residues. Phosphoserine is present on serine 1468. Glycyl lysine isopeptide (Lys-Gly) (interchain with G-Cter in SUMO2) cross-links involve residues lysine 1486 and lysine 1504. The span at 1502–1513 (SIKGSKNSSEIS) shows a compositional bias: polar residues. Positions 1502-1527 (SIKGSKNSSEISSEPGDDDEPTEGSF) are disordered. 6 WD repeats span residues 1529–1568 (GHQA…GVFE), 1570–1611 (HTSK…CVEQ), 1654–1695 (HGPR…LLRT), 1698–1737 (GHSK…RIYK), 1738–1775 (GHNH…RLQV), and 1778–1815 (GHKD…NYRC). Residue lysine 1585 forms a Glycyl lysine isopeptide (Lys-Gly) (interchain with G-Cter in SUMO2) linkage. Residue lysine 1737 forms a Glycyl lysine isopeptide (Lys-Gly) (interchain with G-Cter in SUMO2) linkage. The C2H2-type 2; atypical zinc finger occupies 1813-1838 (YRCWWHGCSLIFGVVDHLKQHLLTDH). Residue lysine 1864 forms a Glycyl lysine isopeptide (Lys-Gly) (interchain with G-Cter in SUMO2) linkage.

As to quaternary structure, interacts with KNOP1. Interacts with TARDBP and NUP107. Interacts (via N-terminus) with RBM39. Interacts with the SH3 domains of FYN and GRB2. In terms of processing, phosphorylated by FYN in vitro.

The protein localises to the nucleus. Its subcellular location is the nucleolus. It localises to the nucleus speckle. Functionally, RNA-binding protein. Specifically binds to 5'-GGGGCC-3' sequence repeats in RNA. Essential for maintenance of peripheral motor neuron and skeletal muscle function. Required for normal expression and/or alternative splicing of a number of genes in spinal cord and skeletal muscle, including the neurite outgrowth inhibitor RTN4. Also contributes to normal mitochondrial respiratory function in motor neurons, via an unknown mechanism. This is Zinc finger protein 106 (ZNF106) from Homo sapiens (Human).